The sequence spans 428 residues: uncharacterized protein (428 aa).

A disordered region spans residues 72-91 (SQGSPVAPSPNHRSTMYSSS). At serine 127 the chain carries Phosphoserine.

This is an uncharacterized protein from Saccharomyces cerevisiae (strain ATCC 204508 / S288c) (Baker's yeast).